Consider the following 580-residue polypeptide: Methyl-CpG-binding domain protein 4 (580 aa).

Positions Met-1–Lys-36 are disordered. Residues Ala-76 to Lys-148 enclose the MBD domain. Phosphoserine occurs at positions 318 and 428. Asp-560 is a catalytic residue.

In terms of assembly, interacts with MLH1.

Its subcellular location is the nucleus. Mismatch-specific DNA N-glycosylase involved in DNA repair. Has thymine glycosylase activity and is specific for G:T mismatches within methylated and unmethylated CpG sites. Can also remove uracil or 5-fluorouracil in G:U mismatches. Has no lyase activity. Was first identified as methyl-CpG-binding protein. The protein is Methyl-CpG-binding domain protein 4 of Homo sapiens (Human).